Consider the following 689-residue polypeptide: Shutoff protein (689 aa).

Residues 1–24 (MSEEPVSGTTVEIEEDTHTPPNSP) are disordered. The interval 226–289 (VMNNLLVKRA…SVLVTVVLEC (64 aa)) is binding to host EIF4G. The 119-residue stretch at 292 to 410 (RLFTSKDMVK…PLYTETSQRL (119 aa)) folds into the RRM domain. Phosphotyrosine; by host occurs at positions 309 and 627. Residues 625–689 (GQYLDPHTGE…GEPDVRGTTS (65 aa)) form a disordered region. The segment covering 645-655 (SGHEFQGDGRH) has biased composition (basic and acidic residues). Positions 656-675 (REPKRGRHFRQRGGPRKPPR) are enriched in basic residues. A compositionally biased stretch (basic and acidic residues) spans 678–689 (AGGEPDVRGTTS).

Belongs to the adenoviridae shutoff protein family. In terms of assembly, monomer. Interacts with hexon protein; this interaction allows chaperoning and trimerization of hexon proteins. Interacts (via N-terminus) with host initiation factor EIF4G (via C-terminus). Interacts (via RRM domain) with viral mRNAs that contain the tripartite leader; this interaction allows ribosome shunting and expression of viral late mRNAs. Might be cleaved by the viral protease. In terms of processing, phosphorylated. Tyrosine phosphorylation enhances preferential binding to tripartite leader mRNAs and allows ribosome shunting. Post-translationally, methylated. Asymmetric dimethylation by host PRMT1 of the Arg/Gly-rich region may regulate shutoff protein binding to hexon and promote the capsid assembly in the nucleus.

The protein localises to the host cytoplasm. In terms of biological role, protein that inhibits host translation while promoting late viral translation by ribosome shunting. Blocks host cap-dependent translation by binding to eIF4G, displacing MKNK1 from cap initiation complexes and preventing EIF4E phosphorylation. Binds to the tripartite leader sequence of viral late mRNAs and recruits host eIF4G, PABPC1/poly-A binding protein and 40S ribosomes subunits on viral mRNAs, allowing ribosome shunting and efficient translation of late viral mRNAs even though conventional translation via ribosome scanning from the cap has been shut off in the host cell. During assembly, acts as a chaperone protein that helps hexon proteins assembly into trimers. The chain is Shutoff protein from Canis lupus familiaris (Dog).